The chain runs to 1372 residues: DNA-directed RNA polymerase subunit beta (1372 aa).

Belongs to the RNA polymerase beta chain family. As to quaternary structure, the RNAP catalytic core consists of 2 alpha, 1 beta, 1 beta' and 1 omega subunit. When a sigma factor is associated with the core the holoenzyme is formed, which can initiate transcription.

It carries out the reaction RNA(n) + a ribonucleoside 5'-triphosphate = RNA(n+1) + diphosphate. Its function is as follows. DNA-dependent RNA polymerase catalyzes the transcription of DNA into RNA using the four ribonucleoside triphosphates as substrates. The protein is DNA-directed RNA polymerase subunit beta of Bradyrhizobium sp. (strain ORS 278).